Here is a 398-residue protein sequence, read N- to C-terminus: 1-deoxy-D-xylulose 5-phosphate reductoisomerase (398 aa).

NADPH-binding residues include T14, G15, S16, I17, Q42, and N128. 1-deoxy-D-xylulose 5-phosphate is bound at residue K129. E130 is an NADPH binding site. Residue D154 participates in Mn(2+) binding. The 1-deoxy-D-xylulose 5-phosphate site is built by S155, E156, S185, and H208. E156 is a Mn(2+) binding site. Residue G214 participates in NADPH binding. The 1-deoxy-D-xylulose 5-phosphate site is built by S221, N226, K227, and E230. E230 lines the Mn(2+) pocket.

Belongs to the DXR family. The cofactor is Mg(2+). Mn(2+) serves as cofactor.

It catalyses the reaction 2-C-methyl-D-erythritol 4-phosphate + NADP(+) = 1-deoxy-D-xylulose 5-phosphate + NADPH + H(+). It functions in the pathway isoprenoid biosynthesis; isopentenyl diphosphate biosynthesis via DXP pathway; isopentenyl diphosphate from 1-deoxy-D-xylulose 5-phosphate: step 1/6. In terms of biological role, catalyzes the NADPH-dependent rearrangement and reduction of 1-deoxy-D-xylulose-5-phosphate (DXP) to 2-C-methyl-D-erythritol 4-phosphate (MEP). This Dechloromonas aromatica (strain RCB) protein is 1-deoxy-D-xylulose 5-phosphate reductoisomerase.